Reading from the N-terminus, the 217-residue chain is Large ribosomal subunit protein uL3 (217 aa).

The disordered stretch occupies residues 135–154; sequence ATHGNSLSHRAPGSIGQCQT. Glutamine 153 carries the post-translational modification N5-methylglutamine.

Belongs to the universal ribosomal protein uL3 family. As to quaternary structure, part of the 50S ribosomal subunit. Forms a cluster with proteins L14 and L19. Methylated by PrmB.

Its function is as follows. One of the primary rRNA binding proteins, it binds directly near the 3'-end of the 23S rRNA, where it nucleates assembly of the 50S subunit. The polypeptide is Large ribosomal subunit protein uL3 (Coxiella burnetii (strain CbuG_Q212) (Coxiella burnetii (strain Q212))).